Reading from the N-terminus, the 156-residue chain is ATP synthase subunit b (156 aa).

The chain crosses the membrane as a helical span at residues 7–29; that stretch reads LLGQAISFALFVWFCMKYVWPPL.

The protein belongs to the ATPase B chain family. In terms of assembly, F-type ATPases have 2 components, F(1) - the catalytic core - and F(0) - the membrane proton channel. F(1) has five subunits: alpha(3), beta(3), gamma(1), delta(1), epsilon(1). F(0) has three main subunits: a(1), b(2) and c(10-14). The alpha and beta chains form an alternating ring which encloses part of the gamma chain. F(1) is attached to F(0) by a central stalk formed by the gamma and epsilon chains, while a peripheral stalk is formed by the delta and b chains.

It localises to the cell inner membrane. Its function is as follows. F(1)F(0) ATP synthase produces ATP from ADP in the presence of a proton or sodium gradient. F-type ATPases consist of two structural domains, F(1) containing the extramembraneous catalytic core and F(0) containing the membrane proton channel, linked together by a central stalk and a peripheral stalk. During catalysis, ATP synthesis in the catalytic domain of F(1) is coupled via a rotary mechanism of the central stalk subunits to proton translocation. Functionally, component of the F(0) channel, it forms part of the peripheral stalk, linking F(1) to F(0). In Vibrio parahaemolyticus serotype O3:K6 (strain RIMD 2210633), this protein is ATP synthase subunit b.